Here is a 151-residue protein sequence, read N- to C-terminus: Ubiquitin-conjugating enzyme E2 2 (151 aa).

In terms of domain architecture, UBC core spans 4–150; the sequence is AARRRLMRDF…VRETVEKSWE (147 aa). Residue Cys-88 is the Glycyl thioester intermediate of the active site.

This sequence belongs to the ubiquitin-conjugating enzyme family.

It localises to the cytoplasm. The protein localises to the nucleus. It carries out the reaction S-ubiquitinyl-[E1 ubiquitin-activating enzyme]-L-cysteine + [E2 ubiquitin-conjugating enzyme]-L-cysteine = [E1 ubiquitin-activating enzyme]-L-cysteine + S-ubiquitinyl-[E2 ubiquitin-conjugating enzyme]-L-cysteine.. It participates in protein modification; protein ubiquitination. Functionally, catalyzes the covalent attachment of ubiquitin to other proteins. Plays a role in transcription regulation by catalyzing the monoubiquitination of histone H2B to form H2BK123ub1. H2BK123ub1 gives a specific tag for epigenetic transcriptional activation and is also a prerequisite for H3K4me and H3K79me formation. Also involved in postreplication repair of UV-damaged DNA, in N-end rule-dependent protein degradation and in sporulation. The protein is Ubiquitin-conjugating enzyme E2 2 (mus-8) of Neurospora crassa (strain ATCC 24698 / 74-OR23-1A / CBS 708.71 / DSM 1257 / FGSC 987).